We begin with the raw amino-acid sequence, 433 residues long: Apolipoprotein L5 (433 aa).

Residues 346–433 (HHRHLPQKAS…GRQAPGRHRQ (88 aa)) form a disordered region. Low complexity predominate over residues 359–371 (SSSRGRAVRGSRV). The span at 422–433 (RKGRQAPGRHRQ) shows a compositional bias: basic residues.

The protein belongs to the apolipoprotein L family. Low level of expression; detected in uterus, testis, skeletal muscle and stomach.

The protein localises to the cytoplasm. In terms of biological role, may affect the movement of lipids in the cytoplasm or allow the binding of lipids to organelles. This chain is Apolipoprotein L5 (APOL5), found in Homo sapiens (Human).